The primary structure comprises 297 residues: Acetylglutamate kinase (297 aa).

Residues 64–65 (GG), arginine 86, and asparagine 190 contribute to the substrate site.

Belongs to the acetylglutamate kinase family. ArgB subfamily.

The protein localises to the cytoplasm. It catalyses the reaction N-acetyl-L-glutamate + ATP = N-acetyl-L-glutamyl 5-phosphate + ADP. It participates in amino-acid biosynthesis; L-arginine biosynthesis; N(2)-acetyl-L-ornithine from L-glutamate: step 2/4. Catalyzes the ATP-dependent phosphorylation of N-acetyl-L-glutamate. The protein is Acetylglutamate kinase of Solidesulfovibrio magneticus (strain ATCC 700980 / DSM 13731 / RS-1) (Desulfovibrio magneticus).